A 278-amino-acid chain; its full sequence is Transmembrane protein 41B (278 aa).

The disordered stretch occupies residues 1–31; it reads MQVHERSHTGGHTFQCNHGNEKKAPAAGKVH. 6 consecutive transmembrane segments (helical) span residues 39–59, 96–116, 142–162, 184–204, 212–232, and 249–269; these read MSLLILVSIFLCAASVMFLVY, FYVEVLVAYFTTYIFLQTFAI, CSGLGASFCYLLSYLVGRPVV, LINYIIFLRITPFLPNWFINI, PLKVFFLGTFIGVAPPSFVAI, and SWNSVIILMVLAVLSILPAIF. The interval 127-238 is VTT domain; required for its function in autophagy; the sequence is GFLYPFPLAL…FVAIKAGTTL (112 aa).

It belongs to the TMEM41 family.

It localises to the endoplasmic reticulum membrane. Its subcellular location is the endomembrane system. The catalysed reaction is a 1,2-diacyl-sn-glycero-3-phospho-L-serine(in) = a 1,2-diacyl-sn-glycero-3-phospho-L-serine(out). It carries out the reaction cholesterol(in) = cholesterol(out). It catalyses the reaction a 1,2-diacyl-sn-glycero-3-phosphocholine(in) = a 1,2-diacyl-sn-glycero-3-phosphocholine(out). The enzyme catalyses a 1,2-diacyl-sn-glycero-3-phosphoethanolamine(in) = a 1,2-diacyl-sn-glycero-3-phosphoethanolamine(out). Functionally, phospholipid scramblase involved in lipid homeostasis and membrane dynamics processes. Has phospholipid scramblase activity toward cholesterol and phosphatidylserine, as well as phosphatidylethanolamine and phosphatidylcholine. Required for autophagosome formation: participates in early stages of autophagosome biogenesis at the endoplasmic reticulum (ER) membrane by reequilibrating the leaflets of the ER as lipids are extracted by atg2 (atg2a or atg2b) to mediate autophagosome assembly. In addition to autophagy, involved in other processes in which phospholipid scramblase activity is required. Required for normal motor neuron development. This is Transmembrane protein 41B from Xenopus laevis (African clawed frog).